Here is a 299-residue protein sequence, read N- to C-terminus: Probable xyloglucan endotransglucosylase/hydrolase protein 10 (299 aa).

A signal peptide spans 1–29; that stretch reads MTLINRSKPFVLLVGFSIISSLLLWVSQA. Positions 30 to 225 constitute a GH16 domain; that stretch reads SVVSSGDFNK…WSKGPFVASF (196 aa). N-linked (GlcNAc...) asparagine glycosylation occurs at Asn-51. Glu-111 functions as the Nucleophile in the catalytic mechanism. Residue Glu-115 is the Proton donor of the active site. Residues Glu-115, 128-130, 138-140, 204-205, and Gly-209 each bind xyloglucan; these read QTN, NRE, and SW. Disulfide bonds link Cys-233-Cys-242 and Cys-280-Cys-294. A glycan (N-linked (GlcNAc...) asparagine) is linked at Asn-238. Arg-285 serves as a coordination point for xyloglucan.

Belongs to the glycosyl hydrolase 16 family. XTH group 1 subfamily. Contains at least one intrachain disulfide bond essential for its enzymatic activity.

The protein localises to the secreted. It is found in the cell wall. Its subcellular location is the extracellular space. It localises to the apoplast. The enzyme catalyses breaks a beta-(1-&gt;4) bond in the backbone of a xyloglucan and transfers the xyloglucanyl segment on to O-4 of the non-reducing terminal glucose residue of an acceptor, which can be a xyloglucan or an oligosaccharide of xyloglucan.. Its function is as follows. Catalyzes xyloglucan endohydrolysis (XEH) and/or endotransglycosylation (XET). Cleaves and religates xyloglucan polymers, an essential constituent of the primary cell wall, and thereby participates in cell wall construction of growing tissues. The protein is Probable xyloglucan endotransglucosylase/hydrolase protein 10 (XTH10) of Arabidopsis thaliana (Mouse-ear cress).